The sequence spans 344 residues: Serpentine receptor class H-72 (344 aa).

The next 7 membrane-spanning stretches (helical) occupy residues Gly30 to Gly50, Leu66 to Ile86, Thr110 to Phe132, Trp155 to Ala175, Ser221 to Val241, Tyr259 to Ile279, and Leu292 to His312.

Belongs to the nematode receptor-like protein srh family.

It localises to the membrane. The polypeptide is Serpentine receptor class H-72 (srh-72) (Caenorhabditis elegans).